The following is a 451-amino-acid chain: Cyclin-dependent kinase 18 (451 aa).

Phosphoserine is present on residues Ser-12, Ser-51, Ser-66, Ser-75, and Ser-109. The Protein kinase domain maps to 121–402 (YVKLDKLGEG…AEAALNHPYF (282 aa)). Residues 127–135 (LGEGTYATV) and Lys-150 each bind ATP. Catalysis depends on Asp-242, which acts as the Proton acceptor. Residues Ser-417 and Ser-420 each carry the phosphoserine modification.

It belongs to the protein kinase superfamily. CMGC Ser/Thr protein kinase family. CDC2/CDKX subfamily. In terms of tissue distribution, in brain, kidney, intestine and at a much lower level, in fetal tissues.

The catalysed reaction is L-seryl-[protein] + ATP = O-phospho-L-seryl-[protein] + ADP + H(+). It carries out the reaction L-threonyl-[protein] + ATP = O-phospho-L-threonyl-[protein] + ADP + H(+). Its function is as follows. May play a role in signal transduction cascades in terminally differentiated cells. The polypeptide is Cyclin-dependent kinase 18 (Cdk18) (Mus musculus (Mouse)).